We begin with the raw amino-acid sequence, 134 residues long: U34-theraphotoxin-Cg1a (134 aa).

Positions 1-19 are cleaved as a signal peptide; it reads MKLAVVFLLTTVVFTLAQS. 3 disulfides stabilise this stretch: C24–C35, C29–C53, and C63–C84. The tract at residues 97–134 is disordered; sequence EQSSTSTSSTQGPITSSTVTTQSEATTETETTTAAEGK. Positions 99–134 are enriched in low complexity; it reads SSTSTSSTQGPITSSTVTTQSEATTETETTTAAEGK.

It belongs to the neurotoxin 32 family. Expressed by the venom gland.

It localises to the secreted. The polypeptide is U34-theraphotoxin-Cg1a (Chilobrachys guangxiensis (Chinese earth tiger tarantula)).